A 248-amino-acid chain; its full sequence is MADWVTGKVTKVQNWTDALFSLTVHAPVLPFTAGQFTKLGLEIDGERVQRAYSYVNSPDNPDLEFYLVTVPDGKLSPRLAALKPGDEVQVVSEAAGFFVLDEVPDCETLWMLATGTAIGPYLSILQLGKDLDRFKNLVLVHAARYAADLSYLPLMQELEKRYEGKLRIQTVVSRETAAGSLTGRIPALIESGELESAIGLPMNKETSHVMLCGNPQMVRDTQQLLKETRQMTKHLRRRPGHMTAEHYW.

The FAD-binding FR-type domain maps to 2–101 (ADWVTGKVTK…SEAAGFFVLD (100 aa)). Residues 50–53 (RAYS), Tyr-66, 74–76 (KLS), and Thr-116 contribute to the FAD site. NADP(+) is bound by residues 143 to 144 (AR), 173 to 174 (SR), Arg-184, 214 to 216 (NPQ), and Asp-220. 247-248 (YW) serves as a coordination point for FAD.

The protein belongs to the ferredoxin--NADP reductase type 1 family. Requires FAD as cofactor.

The protein resides in the cytoplasm. It carries out the reaction 2 reduced [2Fe-2S]-[ferredoxin] + NADP(+) + H(+) = 2 oxidized [2Fe-2S]-[ferredoxin] + NADPH. The catalysed reaction is reduced [flavodoxin] + NADP(+) = oxidized [flavodoxin] + NADPH + 2 H(+). In terms of biological role, transports electrons between flavodoxin or ferredoxin and NADPH. This chain is Flavodoxin/ferredoxin--NADP reductase (fpr), found in Shigella flexneri.